The primary structure comprises 229 residues: Ribonuclease HII (229 aa).

The RNase H type-2 domain occupies 42–229 (TRIAGVDEVG…KPVHKILYQE (188 aa)). Residues aspartate 48, glutamate 49, and aspartate 139 each contribute to the a divalent metal cation site.

The protein belongs to the RNase HII family. The cofactor is Mn(2+). Mg(2+) is required as a cofactor.

The protein localises to the cytoplasm. The enzyme catalyses Endonucleolytic cleavage to 5'-phosphomonoester.. Endonuclease that specifically degrades the RNA of RNA-DNA hybrids. The chain is Ribonuclease HII from Ruegeria sp. (strain TM1040) (Silicibacter sp.).